Consider the following 398-residue polypeptide: cAMP-dependent protein kinase, catalytic subunit-like (398 aa).

The Protein kinase domain occupies 90–344 (LERIITIGKG…TQDVKDHKWF (255 aa)). Residues 96–104 (IGKGTFGRV) and lysine 119 contribute to the ATP site. The active-site Proton acceptor is the aspartate 213. Positions 345–398 (EKVNWDDTLHLRVEPPIVPTLYHPGDTGNFDDYEEDTTGGPLCSQRDRDLFAEW) constitute an AGC-kinase C-terminal domain.

It belongs to the protein kinase superfamily. Ser/Thr protein kinase family. cAMP subfamily.

The enzyme catalyses L-seryl-[protein] + ATP = O-phospho-L-seryl-[protein] + ADP + H(+). The catalysed reaction is L-threonyl-[protein] + ATP = O-phospho-L-threonyl-[protein] + ADP + H(+). The sequence is that of cAMP-dependent protein kinase, catalytic subunit-like from Caenorhabditis elegans.